The sequence spans 317 residues: UDP-3-O-acylglucosamine N-acyltransferase (317 aa).

His229 (proton acceptor) is an active-site residue.

Belongs to the transferase hexapeptide repeat family. LpxD subfamily. In terms of assembly, homotrimer.

It carries out the reaction a UDP-3-O-[(3R)-3-hydroxyacyl]-alpha-D-glucosamine + a (3R)-hydroxyacyl-[ACP] = a UDP-2-N,3-O-bis[(3R)-3-hydroxyacyl]-alpha-D-glucosamine + holo-[ACP] + H(+). The protein operates within bacterial outer membrane biogenesis; LPS lipid A biosynthesis. In terms of biological role, catalyzes the N-acylation of UDP-3-O-acylglucosamine using 3-hydroxyacyl-ACP as the acyl donor. Is involved in the biosynthesis of lipid A, a phosphorylated glycolipid that anchors the lipopolysaccharide to the outer membrane of the cell. In Campylobacter curvus (strain 525.92), this protein is UDP-3-O-acylglucosamine N-acyltransferase.